The following is a 159-amino-acid chain: Cytochrome c-type biogenesis protein CcmE (159 aa).

Topologically, residues 1 to 8 (MNIRRKNR) are cytoplasmic. A helical; Signal-anchor for type II membrane protein transmembrane segment spans residues 9–29 (LWIACAVLAGLALTIGLVLYA). The Periplasmic portion of the chain corresponds to 30–159 (LRSNIDLFYT…PASVYKDPAS (130 aa)). The heme site is built by H130 and Y134. Residues 134–147 (YTPPEVEKAMEANH) are compositionally biased toward basic and acidic residues. The interval 134–159 (YTPPEVEKAMEANHRRPASVYKDPAS) is disordered.

This sequence belongs to the CcmE/CycJ family.

It localises to the cell inner membrane. Heme chaperone required for the biogenesis of c-type cytochromes. Transiently binds heme delivered by CcmC and transfers the heme to apo-cytochromes in a process facilitated by CcmF and CcmH. In Escherichia coli (strain SMS-3-5 / SECEC), this protein is Cytochrome c-type biogenesis protein CcmE.